Here is a 212-residue protein sequence, read N- to C-terminus: MHTKVYVSEDRTKVFVLFYEAACVFSNFYPSGFEAKPVENFLKDTEKKEKLLKFTCSEQYFMYNKALLVGDMDIAEQILKETNPMKMKLLGRKLSMTKEQLKLWSQKSKDVMYRACLEKFSQNEDCRMILFRTHGMKLVEASPTDKIWGIGLDKADQRCEDERNWRGSNWLGEVLDQVREELWTRQEFKSNREQILKESLETRCQILEHFSH.

Expressed in the intestine.

Plays a role in innate immunity by conferring resistance to virulent strains of the Gram-negative bacterium P.aeruginosa via the zip-2 pathway. Can act independently of several immunity-related pathways including pmk-1 p38MAPK, dbl-1 TGF-beta, kgb-1 JNK and bar-1/beta-catenin pathways. The sequence is that of Protein irg-1 from Caenorhabditis elegans.